Reading from the N-terminus, the 192-residue chain is Elongation factor P (192 aa).

A disordered region spans residues E133–S157.

Belongs to the elongation factor P family.

It is found in the cytoplasm. It participates in protein biosynthesis; polypeptide chain elongation. Functionally, involved in peptide bond synthesis. Stimulates efficient translation and peptide-bond synthesis on native or reconstituted 70S ribosomes in vitro. Probably functions indirectly by altering the affinity of the ribosome for aminoacyl-tRNA, thus increasing their reactivity as acceptors for peptidyl transferase. The chain is Elongation factor P from Salinibacter ruber (strain DSM 13855 / M31).